The chain runs to 120 residues: MALDTEKIIEDLKGASILELNDLVKAIEDEFGVSAAAPVAAAGAAGAGAEKTEFDVELTDVGQEKVKVIKVVRDITGLGLKDSKDLVDGAPKNVKEGVSEDEANDIKAKLEEVGATVTVK.

It belongs to the bacterial ribosomal protein bL12 family. Homodimer. Part of the ribosomal stalk of the 50S ribosomal subunit. Forms a multimeric L10(L12)X complex, where L10 forms an elongated spine to which 2 to 4 L12 dimers bind in a sequential fashion. Binds GTP-bound translation factors.

Its function is as follows. Forms part of the ribosomal stalk which helps the ribosome interact with GTP-bound translation factors. Is thus essential for accurate translation. The sequence is that of Large ribosomal subunit protein bL12 from Lactobacillus gasseri (strain ATCC 33323 / DSM 20243 / BCRC 14619 / CIP 102991 / JCM 1131 / KCTC 3163 / NCIMB 11718 / NCTC 13722 / AM63).